Reading from the N-terminus, the 301-residue chain is Prohibitin-2 (301 aa).

2 necessary for transcriptional repression regions span residues 19–49 and 150–174; these read MGTA…GHRA and ASQL…RAKD. Residues 191 to 237 adopt a coiled-coil conformation; sequence REYTAAVESKQVAQQEAQRAQFLVEKAKQDQKQKIVQAEGEAAAAKM.

The protein belongs to the prohibitin family. The mitochondrial prohibitin complex consists of two subunits (PHB1 and PHB2), assembled into a membrane-associated ring-shaped supercomplex of approximately 1 mDa.

It is found in the mitochondrion inner membrane. It localises to the cytoplasm. The protein resides in the nucleus. Its subcellular location is the cell membrane. Its function is as follows. Protein with pleiotropic attributes mediated in a cell-compartment- and tissue-specific manner, which include the plasma membrane-associated cell signaling functions, mitochondrial chaperone, and transcriptional co-regulator of transcription factors and sex steroid hormones in the nucleus. Functionally, in the mitochondria, together with PHB, forms large ring complexes (prohibitin complexes) in the inner mitochondrial membrane (IMM) and functions as a chaperone protein that stabilizes mitochondrial respiratory enzymes and maintains mitochondrial integrity in the IMM, which is required for mitochondrial morphogenesis, neuronal survival, and normal lifespan. In terms of biological role, in the nucleus, serves as transcriptional co-regulator. This Xenopus tropicalis (Western clawed frog) protein is Prohibitin-2 (phb2).